The following is a 545-amino-acid chain: Probable acyl-activating enzyme 4 (545 aa).

This sequence belongs to the ATP-dependent AMP-binding enzyme family. Expressed in roots, leaves, stems, flowers and developing seeds.

Its function is as follows. May act as an acid--thiol ligase that activates carboxylic acids by forming acyl-CoAs. This Arabidopsis thaliana (Mouse-ear cress) protein is Probable acyl-activating enzyme 4 (AEE4).